The sequence spans 360 residues: Photosystem II protein D1 (360 aa).

3 helical membrane passes run 29 to 46 (YIGW…TATS), 118 to 133 (HFLL…EWEF), and 142 to 156 (WISV…AASA). Residue His-118 participates in chlorophyll a binding. Tyr-126 is a binding site for pheophytin a. The [CaMn4O5] cluster site is built by Asp-170 and Glu-189. Residues 197–218 (LHQLGVAGVFGGSLFSAMHGSL) form a helical membrane-spanning segment. Residue His-198 coordinates chlorophyll a. A quinone contacts are provided by residues His-215 and 264–265 (SF). His-215 provides a ligand contact to Fe cation. A Fe cation-binding site is contributed by His-272. The chain crosses the membrane as a helical span at residues 274–288 (FLGLWPVVGIWFTSM). The [CaMn4O5] cluster site is built by His-332, Glu-333, Asp-342, and Ala-344. Positions 345-360 (SNESLPLALVAPAING) are excised as a propeptide.

The protein belongs to the reaction center PufL/M/PsbA/D family. As to quaternary structure, PSII is composed of 1 copy each of membrane proteins PsbA, PsbB, PsbC, PsbD, PsbE, PsbF, PsbH, PsbI, PsbJ, PsbK, PsbL, PsbM, PsbT, PsbX, PsbY, PsbZ, Psb30/Ycf12, at least 3 peripheral proteins of the oxygen-evolving complex and a large number of cofactors. It forms dimeric complexes. The D1/D2 heterodimer binds P680, chlorophylls that are the primary electron donor of PSII, and subsequent electron acceptors. It shares a non-heme iron and each subunit binds pheophytin, quinone, additional chlorophylls, carotenoids and lipids. D1 provides most of the ligands for the Mn4-Ca-O5 cluster of the oxygen-evolving complex (OEC). There is also a Cl(-1) ion associated with D1 and D2, which is required for oxygen evolution. The PSII complex binds additional chlorophylls, carotenoids and specific lipids. is required as a cofactor. Post-translationally, tyr-161 forms a radical intermediate that is referred to as redox-active TyrZ, YZ or Y-Z. C-terminally processed by CTPA; processing is essential to allow assembly of the oxygen-evolving complex and thus photosynthetic growth.

The protein resides in the plastid. It localises to the chloroplast thylakoid membrane. It carries out the reaction 2 a plastoquinone + 4 hnu + 2 H2O = 2 a plastoquinol + O2. Functionally, photosystem II (PSII) is a light-driven water:plastoquinone oxidoreductase that uses light energy to abstract electrons from H(2)O, generating O(2) and a proton gradient subsequently used for ATP formation. It consists of a core antenna complex that captures photons, and an electron transfer chain that converts photonic excitation into a charge separation. The D1/D2 (PsbA/PsbD) reaction center heterodimer binds P680, the primary electron donor of PSII as well as several subsequent electron acceptors. This is Photosystem II protein D1 from Antithamnion sp. (Red alga).